The following is a 367-amino-acid chain: BTB/POZ domain-containing protein Tiwaz (367 aa).

Disordered regions lie at residues 16 to 46 (LTVD…PRDL) and 62 to 87 (SSPT…SSVT). The segment covering 28 to 45 (CDMDRERERDVKALEPRD) has biased composition (basic and acidic residues). The region spanning 135-205 (APVHIDVGGT…MRNSRLLIAE (71 aa)) is the BTB domain. Residues 240-261 (GNYLVAPPTPPARHIKTSPRTS) are disordered.

Functions with the transcription factor TfAP-2 to regulate octopamine neuronal signaling pathways that control behaviors such as male aggression, male mating, and the initiation of feeding. Required for TfAP-2 transcriptional activity in octopaminergic neurons. Functions with TfAP-2 to regulate expression of genes which are involved in promoting octopamine production and secretion from octopaminergic neurons, such as Tbh and Vmat. Octopamine then modulates feeding and male aggression by regulating the expression of the satiation hormone Dsk in insulin-producing cells (IPCs). Functions with octopamine and Dsk as part of a negative feedback loop to prevent overeating; acts with TfAP-2 to regulate octopamine signaling pathways that initiate feeding, then octopamine activates expression of Dsk which inhibits consummatory behavior. May also be involved in negatively regulating nociception in larvae to prevent spontaneous pain and hyperalgesia. The sequence is that of BTB/POZ domain-containing protein Tiwaz from Drosophila melanogaster (Fruit fly).